The sequence spans 693 residues: Lamina-associated polypeptide 2, isoforms alpha/zeta (693 aa).

Residues leucine 5–arginine 48 enclose the LEM-like domain. Disordered stretches follow at residues arginine 48 to glutamate 113, leucine 148 to threonine 211, and threonine 227 to proline 270. The segment at asparagine 49 to aspartate 107 is linker. 3 positions are modified to phosphoserine: serine 59, serine 66, and serine 67. Phosphothreonine is present on threonine 74. A phosphoserine mark is found at serine 79 and serine 82. Residues arginine 85 and arginine 87 each carry the omega-N-methylarginine modification. A compositionally biased stretch (basic and acidic residues) spans lysine 96 to aspartate 105. The LEM domain maps to aspartate 108–glycine 152. The residue at position 153 (threonine 153) is a Phosphothreonine. Positions glutamate 154–asparagine 177 are enriched in polar residues. A phosphoserine mark is found at serine 155 and serine 158. A phosphothreonine mark is found at threonine 159 and threonine 163. 2 positions are modified to phosphoserine: serine 165 and serine 167. A compositionally biased stretch (basic and acidic residues) spans aspartate 178 to lysine 190. Positions lysine 190–valine 196 match the Nuclear localization signal motif. Serine 206 is subject to N6-acetyllysine. Over residues threonine 245–cysteine 254 the composition is skewed to basic and acidic residues. Serine 310 bears the Phosphoserine mark. Arginine 329 carries the omega-N-methylarginine modification. Positions lysine 332 to phenylalanine 351 are disordered. Phosphoserine occurs at positions 349, 352, 368, 420, and 422. Positions glutamine 412–serine 422 are enriched in low complexity. Residues glutamine 412–serine 442 are disordered. Positions threonine 557 to aspartate 656 form a coiled coil. Lysine 655 carries the post-translational modification N6-acetyllysine.

Belongs to the LEM family. In terms of assembly, homooligomer. Interacts with LMNA, BANF1 and RB1 and with chromosomes. Associates directly or indirectly with lamins at specific cell-cycle stages. Interacts with CMTM6. In terms of processing, phosphorylated in a mitose-specific manner.

It localises to the nucleus. It is found in the chromosome. In terms of biological role, may be involved in the structural organization of the nucleus and in the post-mitotic nuclear assembly. Plays an important role, together with LMNA, in the nuclear anchorage of RB1. The sequence is that of Lamina-associated polypeptide 2, isoforms alpha/zeta (Tmpo) from Mus musculus (Mouse).